Reading from the N-terminus, the 432-residue chain is Amino-acid acetyltransferase (432 aa).

The N-acetyltransferase domain maps to 286–425 (EQLREAGIED…ASLYNFQRNS (140 aa)).

This sequence belongs to the acetyltransferase family. ArgA subfamily.

It is found in the cytoplasm. It carries out the reaction L-glutamate + acetyl-CoA = N-acetyl-L-glutamate + CoA + H(+). Its pathway is amino-acid biosynthesis; L-arginine biosynthesis; N(2)-acetyl-L-ornithine from L-glutamate: step 1/4. The protein is Amino-acid acetyltransferase of Pseudomonas paraeruginosa (strain DSM 24068 / PA7) (Pseudomonas aeruginosa (strain PA7)).